Consider the following 595-residue polypeptide: Protein UL31 (595 aa).

Positions 1 to 23 (MGDKPTLVTLLTVAVSSPPPSSP) are cleaved as a signal peptide. The disordered stretch occupies residues 47–94 (TATSEVGEKTAEQEVAAADPETGNERRENRENEGGETRTTGTTAVKRS). The segment covering 69 to 82 (GNERRENRENEGGE) has biased composition (basic and acidic residues). N-linked (GlcNAc...) asparagine; by host glycans are attached at residues N176 and N197.

The protein belongs to the herpesviridae U10 family. Interacts with host CGAS.

Its subcellular location is the host cytoplasm. The protein localises to the host nucleus. Functionally, plays a role in the inhibition of host innate immune system by targeting host CGAS and promoting dissociation of DNA from CGAS, thereby inhibiting the enzymatic activity of CGAS. In Homo sapiens (Human), this protein is Protein UL31.